The primary structure comprises 102 residues: NADH-quinone oxidoreductase subunit K (102 aa).

A run of 3 helical transmembrane segments spans residues 6 to 26 (LIAMMILAAGLFAIGLFGVLA), 30 to 50 (IMFQLVALEVALSGPALGFVA), and 63 to 83 (MFILVLTLAAAEVAVGLALFL).

Belongs to the complex I subunit 4L family. As to quaternary structure, NDH-1 is composed of 14 different subunits. Subunits NuoA, H, J, K, L, M, N constitute the membrane sector of the complex.

The protein resides in the cell inner membrane. The enzyme catalyses a quinone + NADH + 5 H(+)(in) = a quinol + NAD(+) + 4 H(+)(out). In terms of biological role, NDH-1 shuttles electrons from NADH, via FMN and iron-sulfur (Fe-S) centers, to quinones in the respiratory chain. The immediate electron acceptor for the enzyme in this species is believed to be ubiquinone. Couples the redox reaction to proton translocation (for every two electrons transferred, four hydrogen ions are translocated across the cytoplasmic membrane), and thus conserves the redox energy in a proton gradient. The polypeptide is NADH-quinone oxidoreductase subunit K (Rhodopseudomonas palustris (strain BisB5)).